Reading from the N-terminus, the 51-residue chain is Large ribosomal subunit protein bL33 (51 aa).

This sequence belongs to the bacterial ribosomal protein bL33 family.

This is Large ribosomal subunit protein bL33 from Methylococcus capsulatus (strain ATCC 33009 / NCIMB 11132 / Bath).